Consider the following 253-residue polypeptide: uncharacterized protein (253 aa).

Position 10-35 (10-35 (ISGAASKRGIGRATAELFASHGARVA)) interacts with NADP(+). S144 contacts substrate. The Proton acceptor role is filled by Y159.

This sequence belongs to the short-chain dehydrogenases/reductases (SDR) family.

This is an uncharacterized protein from Sinorhizobium fredii (strain NBRC 101917 / NGR234).